We begin with the raw amino-acid sequence, 148 residues long: Arginine repressor (148 aa).

Belongs to the ArgR family.

It localises to the cytoplasm. It functions in the pathway amino-acid biosynthesis; L-arginine biosynthesis [regulation]. In terms of biological role, regulates arginine biosynthesis genes. The protein is Arginine repressor of Prosthecochloris aestuarii (strain DSM 271 / SK 413).